Here is a 272-residue protein sequence, read N- to C-terminus: Shikimate dehydrogenase (NADP(+)) (272 aa).

Shikimate-binding positions include 14–16 and threonine 61; that span reads SKS. The Proton acceptor role is filled by lysine 65. Glutamate 77 contributes to the NADP(+) binding site. 2 residues coordinate shikimate: asparagine 86 and aspartate 102. NADP(+) is bound by residues 126 to 130, 149 to 154, and methionine 213; these read GAGGA and NRTVSR. Tyrosine 215 contributes to the shikimate binding site. Glycine 237 lines the NADP(+) pocket.

This sequence belongs to the shikimate dehydrogenase family. Homodimer.

It catalyses the reaction shikimate + NADP(+) = 3-dehydroshikimate + NADPH + H(+). The protein operates within metabolic intermediate biosynthesis; chorismate biosynthesis; chorismate from D-erythrose 4-phosphate and phosphoenolpyruvate: step 4/7. In terms of biological role, involved in the biosynthesis of the chorismate, which leads to the biosynthesis of aromatic amino acids. Catalyzes the reversible NADPH linked reduction of 3-dehydroshikimate (DHSA) to yield shikimate (SA). The polypeptide is Shikimate dehydrogenase (NADP(+)) (Shigella flexneri).